The chain runs to 204 residues: Crossover junction endodeoxyribonuclease RuvC (204 aa).

Catalysis depends on residues D7, E68, and D141. Mg(2+)-binding residues include D7, E68, and D141. Positions 164 to 204 are disordered; that stretch reads QAVAAHRTSGASRTPGAAGTPGPSRTPGAPGTSRTLKGRTA.

The protein belongs to the RuvC family. As to quaternary structure, homodimer which binds Holliday junction (HJ) DNA. The HJ becomes 2-fold symmetrical on binding to RuvC with unstacked arms; it has a different conformation from HJ DNA in complex with RuvA. In the full resolvosome a probable DNA-RuvA(4)-RuvB(12)-RuvC(2) complex forms which resolves the HJ. It depends on Mg(2+) as a cofactor.

The protein resides in the cytoplasm. It carries out the reaction Endonucleolytic cleavage at a junction such as a reciprocal single-stranded crossover between two homologous DNA duplexes (Holliday junction).. Functionally, the RuvA-RuvB-RuvC complex processes Holliday junction (HJ) DNA during genetic recombination and DNA repair. Endonuclease that resolves HJ intermediates. Cleaves cruciform DNA by making single-stranded nicks across the HJ at symmetrical positions within the homologous arms, yielding a 5'-phosphate and a 3'-hydroxyl group; requires a central core of homology in the junction. The consensus cleavage sequence is 5'-(A/T)TT(C/G)-3'. Cleavage occurs on the 3'-side of the TT dinucleotide at the point of strand exchange. HJ branch migration catalyzed by RuvA-RuvB allows RuvC to scan DNA until it finds its consensus sequence, where it cleaves and resolves the cruciform DNA. This chain is Crossover junction endodeoxyribonuclease RuvC, found in Streptomyces griseus subsp. griseus (strain JCM 4626 / CBS 651.72 / NBRC 13350 / KCC S-0626 / ISP 5235).